Reading from the N-terminus, the 357-residue chain is MNSIEKKQLLGLDLNQMEEFLLGLEEPRFRGRQVYKWIYQKECSSFYEMSDLPRSLRKKLDEKARVSIPRVLKQRVGKDGSRKFLMELDDKKKIECVLLPQSRDKKSSYTLCLSTQVGCPIACSFCATGQSGFQRNLKAFEIIGQYLGSKKELSKRLKSPRAELISNVVYMGMGEPLLNYDEVIKSVHMLNDPRGINLGQRRITISTSGEVAGIKKLAQENIQLTLAISLHACDNSLRDQLIPLNRKYPLEVLFPAIEDYIAFTGRRVTFEYLLLDEVNMSRNDANKMVKLLKPLLANLNLIPYNEIEGLPFKKPETAKIWQFYQWLQDGGLNVSIREERGSDINAACGQLRSDYRR.

Glu-95 functions as the Proton acceptor in the catalytic mechanism. In terms of domain architecture, Radical SAM core spans 105–343 (KKSSYTLCLS…VSIREERGSD (239 aa)). The cysteines at positions 112 and 348 are disulfide-linked. The [4Fe-4S] cluster site is built by Cys-119, Cys-123, and Cys-126. S-adenosyl-L-methionine is bound by residues 174–175 (GE), Ser-206, 229–231 (SLH), and Asn-305. Cys-348 serves as the catalytic S-methylcysteine intermediate.

Belongs to the radical SAM superfamily. RlmN family. [4Fe-4S] cluster is required as a cofactor.

The protein localises to the cytoplasm. The enzyme catalyses adenosine(2503) in 23S rRNA + 2 reduced [2Fe-2S]-[ferredoxin] + 2 S-adenosyl-L-methionine = 2-methyladenosine(2503) in 23S rRNA + 5'-deoxyadenosine + L-methionine + 2 oxidized [2Fe-2S]-[ferredoxin] + S-adenosyl-L-homocysteine. The catalysed reaction is adenosine(37) in tRNA + 2 reduced [2Fe-2S]-[ferredoxin] + 2 S-adenosyl-L-methionine = 2-methyladenosine(37) in tRNA + 5'-deoxyadenosine + L-methionine + 2 oxidized [2Fe-2S]-[ferredoxin] + S-adenosyl-L-homocysteine. In terms of biological role, specifically methylates position 2 of adenine 2503 in 23S rRNA and position 2 of adenine 37 in tRNAs. The polypeptide is Probable dual-specificity RNA methyltransferase RlmN (Syntrophomonas wolfei subsp. wolfei (strain DSM 2245B / Goettingen)).